The primary structure comprises 81 residues: Cytochrome c6 (81 aa).

Positions 10, 13, 14, and 54 each coordinate heme c.

This sequence belongs to the cytochrome c family. PetJ subfamily. In terms of assembly, monomer. In terms of processing, binds 1 heme c group covalently per subunit.

It is found in the cellular thylakoid lumen. Functionally, functions as an electron carrier between membrane-bound cytochrome b6-f and photosystem I in oxygenic photosynthesis. This chain is Cytochrome c6 (petJ), found in Microcystis aeruginosa.